The sequence spans 359 residues: UDP-N-acetylglucosamine--N-acetylmuramyl-(pentapeptide) pyrophosphoryl-undecaprenol N-acetylglucosamine transferase (359 aa).

UDP-N-acetyl-alpha-D-glucosamine-binding positions include Thr-15–Gly-17, Asn-127, Arg-166, Ser-191, Ile-245, Ala-264–Glu-269, and Gln-290.

The protein belongs to the glycosyltransferase 28 family. MurG subfamily.

Its subcellular location is the cell inner membrane. The enzyme catalyses di-trans,octa-cis-undecaprenyl diphospho-N-acetyl-alpha-D-muramoyl-L-alanyl-D-glutamyl-meso-2,6-diaminopimeloyl-D-alanyl-D-alanine + UDP-N-acetyl-alpha-D-glucosamine = di-trans,octa-cis-undecaprenyl diphospho-[N-acetyl-alpha-D-glucosaminyl-(1-&gt;4)]-N-acetyl-alpha-D-muramoyl-L-alanyl-D-glutamyl-meso-2,6-diaminopimeloyl-D-alanyl-D-alanine + UDP + H(+). It functions in the pathway cell wall biogenesis; peptidoglycan biosynthesis. Cell wall formation. Catalyzes the transfer of a GlcNAc subunit on undecaprenyl-pyrophosphoryl-MurNAc-pentapeptide (lipid intermediate I) to form undecaprenyl-pyrophosphoryl-MurNAc-(pentapeptide)GlcNAc (lipid intermediate II). The polypeptide is UDP-N-acetylglucosamine--N-acetylmuramyl-(pentapeptide) pyrophosphoryl-undecaprenol N-acetylglucosamine transferase (Pseudomonas putida (strain ATCC 47054 / DSM 6125 / CFBP 8728 / NCIMB 11950 / KT2440)).